Here is a 265-residue protein sequence, read N- to C-terminus: Putative hydro-lyase PA2116 (265 aa).

Belongs to the D-glutamate cyclase family.

This chain is Putative hydro-lyase PA2116, found in Pseudomonas aeruginosa (strain ATCC 15692 / DSM 22644 / CIP 104116 / JCM 14847 / LMG 12228 / 1C / PRS 101 / PAO1).